Here is a 600-residue protein sequence, read N- to C-terminus: UDP-sugar pyrophospharylase (600 aa).

Belongs to the USP family. It depends on Mg(2+) as a cofactor. Requires Mn(2+) as cofactor. Post-translationally, the N-terminus is blocked.

The enzyme catalyses a monosaccharide 1-phosphate + UTP + H(+) = a UDP-monosaccharide + diphosphate. With respect to regulation, inhibited by a high concentration of pyrophosphate. May function as the terminal enzyme of the myo-inositol oxidation (MIO) pathway. May also play a role in the salvage pathway for synthesis of nucleotide sugars. The chain is UDP-sugar pyrophospharylase (USP) from Pisum sativum (Garden pea).